Here is a 479-residue protein sequence, read N- to C-terminus: Membrane-bound lytic murein transglycosylase F (479 aa).

Positions 1 to 15 (MKRLLLVLCYITLLA) are cleaved as a signal peptide. The interval 16–258 (GCQKVVVEQE…HLNEKYFAHV (243 aa)) is non-LT domain. The interval 260 to 479 (RFDYVDTRAF…QTDAIQPQQP (220 aa)) is LT domain. E303 is a catalytic residue. Residues 457-479 (LQTAEAKETEEKPQTDAIQPQQP) are disordered. Positions 461 to 470 (EAKETEEKPQ) are enriched in basic and acidic residues.

In the N-terminal section; belongs to the bacterial solute-binding protein 3 family. It in the C-terminal section; belongs to the transglycosylase Slt family.

Its subcellular location is the cell outer membrane. It catalyses the reaction Exolytic cleavage of the (1-&gt;4)-beta-glycosidic linkage between N-acetylmuramic acid (MurNAc) and N-acetylglucosamine (GlcNAc) residues in peptidoglycan, from either the reducing or the non-reducing ends of the peptidoglycan chains, with concomitant formation of a 1,6-anhydrobond in the MurNAc residue.. Murein-degrading enzyme that degrades murein glycan strands and insoluble, high-molecular weight murein sacculi, with the concomitant formation of a 1,6-anhydromuramoyl product. Lytic transglycosylases (LTs) play an integral role in the metabolism of the peptidoglycan (PG) sacculus. Their lytic action creates space within the PG sacculus to allow for its expansion as well as for the insertion of various structures such as secretion systems and flagella. In Shewanella pealeana (strain ATCC 700345 / ANG-SQ1), this protein is Membrane-bound lytic murein transglycosylase F.